The sequence spans 229 residues: Cytochrome c oxidase subunit 2 (229 aa).

Residues Met1 to Ser14 lie on the Mitochondrial intermembrane side of the membrane. The helical transmembrane segment at Pro15–Met45 threads the bilayer. Residues Leu46 to Gln59 lie on the Mitochondrial matrix side of the membrane. A helical membrane pass occupies residues Gln60–Met87. At Asp88–Leu229 the chain is on the mitochondrial intermembrane side. His161, Cys196, Glu198, Cys200, His204, and Met207 together coordinate Cu cation. A Mg(2+)-binding site is contributed by Glu198.

Belongs to the cytochrome c oxidase subunit 2 family. As to quaternary structure, component of the cytochrome c oxidase (complex IV, CIV), a multisubunit enzyme composed of 14 subunits. The complex is composed of a catalytic core of 3 subunits MT-CO1, MT-CO2 and MT-CO3, encoded in the mitochondrial DNA, and 11 supernumerary subunits COX4I, COX5A, COX5B, COX6A, COX6B, COX6C, COX7A, COX7B, COX7C, COX8 and NDUFA4, which are encoded in the nuclear genome. The complex exists as a monomer or a dimer and forms supercomplexes (SCs) in the inner mitochondrial membrane with NADH-ubiquinone oxidoreductase (complex I, CI) and ubiquinol-cytochrome c oxidoreductase (cytochrome b-c1 complex, complex III, CIII), resulting in different assemblies (supercomplex SCI(1)III(2)IV(1) and megacomplex MCI(2)III(2)IV(2)). Found in a complex with TMEM177, COA6, COX18, COX20, SCO1 and SCO2. Interacts with TMEM177 in a COX20-dependent manner. Interacts with COX20. Interacts with COX16. Cu cation serves as cofactor.

It is found in the mitochondrion inner membrane. The enzyme catalyses 4 Fe(II)-[cytochrome c] + O2 + 8 H(+)(in) = 4 Fe(III)-[cytochrome c] + 2 H2O + 4 H(+)(out). In terms of biological role, component of the cytochrome c oxidase, the last enzyme in the mitochondrial electron transport chain which drives oxidative phosphorylation. The respiratory chain contains 3 multisubunit complexes succinate dehydrogenase (complex II, CII), ubiquinol-cytochrome c oxidoreductase (cytochrome b-c1 complex, complex III, CIII) and cytochrome c oxidase (complex IV, CIV), that cooperate to transfer electrons derived from NADH and succinate to molecular oxygen, creating an electrochemical gradient over the inner membrane that drives transmembrane transport and the ATP synthase. Cytochrome c oxidase is the component of the respiratory chain that catalyzes the reduction of oxygen to water. Electrons originating from reduced cytochrome c in the intermembrane space (IMS) are transferred via the dinuclear copper A center (CU(A)) of subunit 2 and heme A of subunit 1 to the active site in subunit 1, a binuclear center (BNC) formed by heme A3 and copper B (CU(B)). The BNC reduces molecular oxygen to 2 water molecules using 4 electrons from cytochrome c in the IMS and 4 protons from the mitochondrial matrix. The chain is Cytochrome c oxidase subunit 2 (MT-CO2) from Pelomedusa subrufa (African side-necked turtle).